The sequence spans 292 residues: Homoserine kinase (292 aa).

ATP is bound at residue 81–91; the sequence is RPRSGLGSSGA.

The protein belongs to the GHMP kinase family. Homoserine kinase subfamily.

Its subcellular location is the cytoplasm. The catalysed reaction is L-homoserine + ATP = O-phospho-L-homoserine + ADP + H(+). The protein operates within amino-acid biosynthesis; L-threonine biosynthesis; L-threonine from L-aspartate: step 4/5. Functionally, catalyzes the ATP-dependent phosphorylation of L-homoserine to L-homoserine phosphate. The chain is Homoserine kinase from Thermococcus kodakarensis (strain ATCC BAA-918 / JCM 12380 / KOD1) (Pyrococcus kodakaraensis (strain KOD1)).